The sequence spans 195 residues: MRAVVSLAVVFVLSYLLGSLVAGVLYSRGRGEDIRGRDLPGGSGTYRQYGKGAAAAVTLADILKGAAAVGLALWLAPQALPLATALATFGVVFGHCYPVWFGFRGGGGIAPFLGAMLVVAPWTLLATVTFALALIPLYRATLQPRLRLNAIPFATVVAVPVGLLIASRLGGGAEFLAGSAAMGIRAVHLLAEQRA.

6 consecutive transmembrane segments (helical) span residues 4-24 (VVSL…VAGV), 52-72 (GAAA…VGLA), 73-93 (LWLA…GVVF), 115-135 (AMLV…LALI), 150-170 (AIPF…SRLG), and 171-191 (GGAE…HLLA).

The protein belongs to the PlsY family. In terms of assembly, probably interacts with PlsX.

The protein localises to the cell membrane. It catalyses the reaction an acyl phosphate + sn-glycerol 3-phosphate = a 1-acyl-sn-glycero-3-phosphate + phosphate. Its pathway is lipid metabolism; phospholipid metabolism. Its function is as follows. Catalyzes the transfer of an acyl group from acyl-phosphate (acyl-PO(4)) to glycerol-3-phosphate (G3P) to form lysophosphatidic acid (LPA). This enzyme utilizes acyl-phosphate as fatty acyl donor, but not acyl-CoA or acyl-ACP. The protein is Glycerol-3-phosphate acyltransferase 2 of Deinococcus radiodurans (strain ATCC 13939 / DSM 20539 / JCM 16871 / CCUG 27074 / LMG 4051 / NBRC 15346 / NCIMB 9279 / VKM B-1422 / R1).